Reading from the N-terminus, the 152-residue chain is Transcriptional regulator MraZ (152 aa).

2 SpoVT-AbrB domains span residues 5–52 and 81–124; these read ASAI…PIHE and AHEV…DEQA.

This sequence belongs to the MraZ family. In terms of assembly, forms oligomers.

It localises to the cytoplasm. It is found in the nucleoid. This Shewanella sp. (strain ANA-3) protein is Transcriptional regulator MraZ.